We begin with the raw amino-acid sequence, 360 residues long: tRNA-specific 2-thiouridylase MnmA (360 aa).

Residues 9-16 (AMSGGVDS) and leucine 35 contribute to the ATP site. Cysteine 104 (nucleophile) is an active-site residue. A disulfide bond links cysteine 104 and cysteine 197. Residue glycine 128 coordinates ATP. The tract at residues 147–149 (KDQ) is interaction with tRNA. The active-site Cysteine persulfide intermediate is the cysteine 197.

This sequence belongs to the MnmA/TRMU family.

Its subcellular location is the cytoplasm. It carries out the reaction S-sulfanyl-L-cysteinyl-[protein] + uridine(34) in tRNA + AH2 + ATP = 2-thiouridine(34) in tRNA + L-cysteinyl-[protein] + A + AMP + diphosphate + H(+). In terms of biological role, catalyzes the 2-thiolation of uridine at the wobble position (U34) of tRNA, leading to the formation of s(2)U34. The sequence is that of tRNA-specific 2-thiouridylase MnmA from Salinispora tropica (strain ATCC BAA-916 / DSM 44818 / JCM 13857 / NBRC 105044 / CNB-440).